The sequence spans 570 residues: MLNKKPPYLILSLIMIKTQKSKQTAVRKLIPGNVISLKITAMGANNVGINEFTFGIPVLVPNAKLGETVQAKVLKILASKKIAIAKLIKVVTKTNATETNNLAALTPGATLDVTITKLGPNSTGIADLGNNYNNVNKLIVKKSAITIGEKVTVLVTRVKNGYAFGVATVSTQRLNQVSTSLTQNSFKGTKFTVVLPKNAKRYLKHLVFKVTTATAQNLSVNGFEQTLFKKGAVGLDTRINNQNGSAGNLTTVPTNTILFVKPNLGAKLGDKVQIQIIKFASIENGTLTYNVAIAKIIKLNPLSTPQKKAFVRSSLRQMLKSGMHYGEKAIKCNARMKNYVWTRKKGTDTKVEARPLIKKGRNLINLLKTRRCLTKALAQLTKYAAKGKTFLFVGTKKAASGLVARAALFSKKAFFVNTRWLGGMLTNWKTILKSISKIRPILKEKQMIIKDILEKRQTIKARLIQKALLLRKKSKLMLKKGRLLIQMLKQNNSNSTSGKQAVRFLFTEKTNLLNTKRKEFVSKGILLLEKRQQLVVKRQELITQSQTLKSKAIQLTNTISQFIKQFNLFT.

Residues 1–306 (MLNKKPPYLI…IKLNPLSTPQ (306 aa)) form an N-terminal extension region. TRAM domains are found at residues 28–89 (KLIP…KLIK) and 104–169 (ALTP…VATV).

Belongs to the universal ribosomal protein uS2 family.

The protein resides in the plastid. It is found in the chloroplast. The chain is Small ribosomal subunit protein uS2c (rps2-1) from Chlamydomonas reinhardtii (Chlamydomonas smithii).